We begin with the raw amino-acid sequence, 61 residues long: Small ribosomal subunit protein bS21 (61 aa).

Positions 34-61 are disordered; it reads KREHYESPSVKRKKKSEAARKRKYKYNK. The segment covering 43–61 has biased composition (basic residues); it reads VKRKKKSEAARKRKYKYNK.

It belongs to the bacterial ribosomal protein bS21 family.

This chain is Small ribosomal subunit protein bS21, found in Thermoanaerobacter pseudethanolicus (strain ATCC 33223 / 39E) (Clostridium thermohydrosulfuricum).